The chain runs to 283 residues: Bifunctional protein FolD (283 aa).

NADP(+) is bound by residues 165-167 (GRS), Ser-190, and Val-231.

The protein belongs to the tetrahydrofolate dehydrogenase/cyclohydrolase family. In terms of assembly, homodimer.

It catalyses the reaction (6R)-5,10-methylene-5,6,7,8-tetrahydrofolate + NADP(+) = (6R)-5,10-methenyltetrahydrofolate + NADPH. The enzyme catalyses (6R)-5,10-methenyltetrahydrofolate + H2O = (6R)-10-formyltetrahydrofolate + H(+). The protein operates within one-carbon metabolism; tetrahydrofolate interconversion. Catalyzes the oxidation of 5,10-methylenetetrahydrofolate to 5,10-methenyltetrahydrofolate and then the hydrolysis of 5,10-methenyltetrahydrofolate to 10-formyltetrahydrofolate. This is Bifunctional protein FolD from Bacillus velezensis (strain DSM 23117 / BGSC 10A6 / LMG 26770 / FZB42) (Bacillus amyloliquefaciens subsp. plantarum).